The following is a 1366-amino-acid chain: DNA-directed RNA polymerase subunit beta'' (1366 aa).

The Zn(2+) site is built by C220, C291, C298, and C301.

Belongs to the RNA polymerase beta' chain family. RpoC2 subfamily. In terms of assembly, in plastids the minimal PEP RNA polymerase catalytic core is composed of four subunits: alpha, beta, beta', and beta''. When a (nuclear-encoded) sigma factor is associated with the core the holoenzyme is formed, which can initiate transcription. The cofactor is Zn(2+).

The protein localises to the plastid. Its subcellular location is the chloroplast. It carries out the reaction RNA(n) + a ribonucleoside 5'-triphosphate = RNA(n+1) + diphosphate. Functionally, DNA-dependent RNA polymerase catalyzes the transcription of DNA into RNA using the four ribonucleoside triphosphates as substrates. In Phaseolus vulgaris (Kidney bean), this protein is DNA-directed RNA polymerase subunit beta''.